An 82-amino-acid chain; its full sequence is Putative ribonuclease VapC34 (82 aa).

Asp-4 provides a ligand contact to Mg(2+).

It belongs to the PINc/VapC protein family. Requires Mg(2+) as cofactor.

Its function is as follows. Toxic component of a possible type II toxin-antitoxin (TA) system. A putative RNase. Its cognate antitoxin is VapB34. The chain is Putative ribonuclease VapC34 (vapC34) from Mycobacterium tuberculosis (strain CDC 1551 / Oshkosh).